Consider the following 155-residue polypeptide: S-ribosylhomocysteine lyase (155 aa).

Fe cation-binding residues include histidine 57, histidine 61, and cysteine 124.

It belongs to the LuxS family. As to quaternary structure, homodimer. Fe cation serves as cofactor.

The enzyme catalyses S-(5-deoxy-D-ribos-5-yl)-L-homocysteine = (S)-4,5-dihydroxypentane-2,3-dione + L-homocysteine. Involved in the synthesis of autoinducer 2 (AI-2) which is secreted by bacteria and is used to communicate both the cell density and the metabolic potential of the environment. The regulation of gene expression in response to changes in cell density is called quorum sensing. Catalyzes the transformation of S-ribosylhomocysteine (RHC) to homocysteine (HC) and 4,5-dihydroxy-2,3-pentadione (DPD). This chain is S-ribosylhomocysteine lyase, found in Listeria monocytogenes serotype 4b (strain CLIP80459).